A 374-amino-acid polypeptide reads, in one-letter code: MGSKVSVEESVRVVIVGGGFAGIAAASQLKSFGIPFLLVDMKDAFHHNVAALRACVESGFARKTFISYKDSFHDSFKQGKVVGINLQTQLVILESNEELSFSHLIIATGSNGPFPGKFNEVISKDQAIQIYENLVEEIQKAKHVVVVGGGSAGVEMAAEVKTDYPEKEVTLIHSKIALADVQLQPSVRRTVKEILLRKGVRLILAQKVTNLDQVTPNVAQENMELQLDKDSEVVNCDLVLCCIGLKVSSSSYRSALGDKMAEDGSLIVNDYLQVQGHENVYAVGDCAYINEPKMAYYAGIHARVAATNVRNSLIGKSLKSYIPGALSMLLSMGRNDGVGQFNGYYLGRCFVTMAKSRDIFVSKSWKEMGQTMPR.

G2 is lipidated: N-myristoyl glycine. Residues 13–35 form a helical membrane-spanning segment; it reads VVIVGGGFAGIAAASQLKSFGIP. 6-hydroxy-FAD-binding positions include 17–21, R53, and V81; that span reads GGGFA. K167 is subject to N6-acetyllysine. D285 contacts 6-hydroxy-FAD.

This sequence belongs to the FAD-dependent oxidoreductase family. It depends on 6-hydroxy-FAD as a cofactor. N-myristoylation at Gly-2 mediates the recruitment to lipid droplets and plasma membrane. Post-translationally, acetylation at Lys-167 prevents AIFM2 ubiquitination and degradation, thereby inhibiting ferroptosis. KAT2B mediates acetylation at Lys-167, while HDAC3 removes it. In terms of processing, ubiquitinated. AIFM2 undergoes 'Lys-29'-ubiquitination and proteasomal degradation, which is inhibited by acetylation at Lys-167.

Its subcellular location is the lipid droplet. It is found in the cell membrane. It localises to the cytoplasm. The protein resides in the mitochondrion membrane. The protein localises to the nucleus. It catalyses the reaction ubiquinone-10 + NADH + H(+) = ubiquinol-10 + NAD(+). It carries out the reaction phylloquinone + NADH + H(+) = phylloquinol + NAD(+). The enzyme catalyses menaquinone-4 + NADH + H(+) = menaquinol-4 + NAD(+). The catalysed reaction is menadione + NADH + H(+) = menadiol + NAD(+). The modification by 4-hydroxy-2-nonenal (HNE) adduction in mitochondria results in loss of the oxidoreductase activity and activation of a novel function in mitochondrial oxidative stress signaling. An NAD(P)H-dependent oxidoreductase that acts as a key inhibitor of ferroptosis. At the plasma membrane, catalyzes reduction of coenzyme Q/ubiquinone-10 to ubiquinol-10, a lipophilic radical-trapping antioxidant that prevents lipid oxidative damage and consequently ferroptosis. Acts in parallel to GPX4 to suppress phospholipid peroxidation and ferroptosis. This anti-ferroptotic function is independent of cellular glutathione levels. Also acts as a potent radical-trapping antioxidant by mediating warfarin-resistant vitamin K reduction in the canonical vitamin K cycle: catalyzes NAD(P)H-dependent reduction of vitamin K (phylloquinone, menaquinone-4 and menadione) to hydroquinone forms. Hydroquinones act as potent radical-trapping antioxidants inhibitor of phospholipid peroxidation and ferroptosis. May play a role in mitochondrial stress signaling. Upon oxidative stress, associates with the lipid peroxidation end product 4-hydroxy-2-nonenal (HNE) forming a lipid adduct devoid of oxidoreductase activity, which then translocates from mitochondria into the nucleus triggering DNA damage and cell death. This Xenopus laevis (African clawed frog) protein is Ferroptosis suppressor protein 1 (aifm2).